Reading from the N-terminus, the 1951-residue chain is MGENEDEKQAQASQVFENFVQATTCKGTLQAFNILTCLLDLDPLDHRNFYSQLKSKVNTWKAKALWHKLDKRGSHKEYKRGKACSNTKCLIVGGGPCGLRTAIELAYLGAKVVVVEKRDTFSRNNVLHLWPFTIHDLRGLGAKKFYGKFCAGSIDHISIRQLQLILFKVALMLGVEVHVNVEFVRVLEPPEDQENQKVGWRAEFLPADHALSDFEFDVIIGADGHRNTLEGFRRKEFRGKLAIAITANFINRNSTAEAKVEEISGVAFIFNQKFFQDLKEETGIDLENIVYYKDSTHYFVMTAKKQSLLDKGVILNDYIDTEMLLCSENVNQDNLLSYAREAADFATNYQLPSLDFAINHNGQPDVAMFDFTSMYASENAALMRERQAHQLLVALVGDSLLEPFWPMGTGCARGFLAAFDTAWMVKSWDQGTPPLEVLAERESLYRLLPQTTPENINKNFEQYTLDPATRYPNLNLHCVRPHQVKHLYITKEMDRFPLERWGSVRRSVSLSRRESDIRPNKLLTWCQQQTKGYQHVRVTDLTTSWRSGLALCAIIHSFRPELINFDSLNEDDAVENNQLAFDVAKREFGILPVTTGKEMASTQEPDKLSMVMYLSKFYELFRGTPLRPMDSWRKNYGENADFGLGKTFIQNNYLNLTLPRKRTPRVDTQTEENDMNKRRRQGFNHLEELPSFSSRSLGSSQEYAKESGSQNKVKHMANQLLAKFEENTRNPSVVKQDCRRVSGIGKPVLCSASRPPGTSCCPKLEESTPRLPPPLKRQFSSTVATGQVLRELNQVPASGECPSRPWRARAKSDLQLGGVENLATLPRTCQGALALSGVLRRLQQVEEKVLQKRAQNLANREFHTKNIKEKAAHLASMFGHGDLPQDKLLSKRVPHAHPPSPPSCLPSPHPAAASSPPAADSVSPARKVVALNHRLPPPLHLTVGKVSSGIGAAAEVLVNLYLNDHRPKTQATSPDLESPRKAFPLSLGGRDTCYFCKKRVYMIERLSAEGHFFHQECFRCSVCSATLRLAAYAFDCDEGKFYCKPHFVHCKTSSKQRKRRAELNQQREEEGTWQEQEAPRRDVPTESSCAVAAISTPEGSPPDEPISPKKPKSVPEPNPRDVEAEATSPRPSEWTSVRISPGEDTVRQDVLAVRVLVTSEDSSSDTESDYGSITAPCAGAYEERPQLPESPPLSKPLTRHISLRENLTQPVSLLHEEPQALPALQRAHSLQSPTPSKYQNWRRRFQSNSTPMNQRAPSPPKEPPPPPSLSSSSSLPSSFSSASVPGHTADDSSSPQVTYNLHSPQISRGDVSPTPIYLRRARAQGIVKEIPLYLPHSPMLESTEDCLVEPGRESLRSPEEISSSEGCQEARALGNTRSIQHPILGKDQYLPNQNLALGAAGNPGDPREESRMGQPGGPELSKERKLGLKKLVLTEEQKNKLLDWSDCTQEHKTGEQLSQESAENIRGGSLKPTCSSTLSQAVKEKLLSQKKALGGMRTPAVKAPQEREVPPPKSPLKLIANAILRSLLHNSEAGKKTSPKPESKTLPRGQPHARSFSLRKLGSSKDGDQQSPGRHMAKKASAFFSLASPTSKVAQASDLSLPNSILRSRSLPSRPSKMFFSTTPHSKVEDVPTLLEKVSLQDATHSPKTGASHISSLGLKDKSFESFLQECKQRKDIGDFFNSPKEEGPPGNRVPSLEKLVQPVGSTSMGQVAHPSSTGQDARKLEGGEGGSSLVSSLVLVSDPVAPVTEATSSPTSSSAEEEADSQLSLRIKEKILRRRRKLEKQSAKQEELKRLHKAQAIQRQLEEVEERQRTLAIQGVKLEKVLRGEAADSGTQDEAQLLQEWFKLVLEKNKLMRYESELLIMAQELELEDHQSRLEQKLRQKMLKDEGQKDENDLKEEQEIFEEMMQVIEQRNKLVDSLEEQRVKERTQDQHFENFVLSRGCQLSRT.

Positions 2–494 are monooxygenase domain; it reads GENEDEKQAQ…KHLYITKEMD (493 aa). Residues cysteine 97, 116-118, 123-125, phenylalanine 183, tyrosine 298, and aspartate 398 contribute to the FAD site; these read EKR and RNN. The Calponin-homology (CH) domain maps to 516–619; that stretch reads DIRPNKLLTW…MVMYLSKFYE (104 aa). At serine 631 the chain carries Phosphoserine. The short motif at 660–681 is the Nuclear localization signal element; the sequence is RKRTPRVDTQTEENDMNKRRRQ. Disordered regions lie at residues 663–712 and 891–921; these read TPRV…SQNK and KRVP…AADS. Residues 691–700 are compositionally biased toward low complexity; the sequence is SFSSRSLGSS. Positions 896–909 are enriched in pro residues; that stretch reads AHPPSPPSCLPSPH. Residues 910–921 are compositionally biased toward low complexity; sequence PAAASSPPAADS. The LIM zinc-binding domain maps to 991-1053; the sequence is DTCYFCKKRV…KPHFVHCKTS (63 aa). Cysteine 993, cysteine 996, histidine 1014, cysteine 1017, cysteine 1020, cysteine 1023, cysteine 1043, and histidine 1046 together coordinate Zn(2+). A Phosphoserine modification is found at threonine 1052. 10 disordered regions span residues 1054–1141, 1158–1314, 1348–1368, 1383–1427, 1451–1476, 1489–1580, 1594–1624, 1678–1697, 1706–1731, and 1747–1766; these read SKQR…RISP, TSED…VSPT, VEPG…EGCQ, ILGK…RKLG, HKTG…TCSS, QKKA…AKKA, AQAS…STTP, GDFF…VPSL, STSM…GEGG, and PVTE…EADS. Positions 1061 to 1070 are enriched in basic and acidic residues; that stretch reads AELNQQREEE. Composition is skewed to polar residues over residues 1129–1138, 1228–1239, and 1246–1256; these read PRPSEWTSVR, HSLQSPTPSKYQ, and QSNSTPMNQRA. Positions 1257-1268 are enriched in pro residues; sequence PSPPKEPPPPPS. Low complexity predominate over residues 1269-1285; sequence LSSSSSLPSSFSSASVP. Positions 1291–1306 are enriched in polar residues; that stretch reads DSSSPQVTYNLHSPQI. The segment at 1314–1353 is interaction with MAPK1; sequence TPIYLRRARAQGIVKEIPLYLPHSPMLESTEDCLVEPGRE. Over residues 1350-1359 the composition is skewed to basic and acidic residues; sequence PGRESLRSPE. Residues 1532–1545 show a composition bias toward basic and acidic residues; the sequence is EAGKKTSPKPESKT. Residues 1599-1616 are compositionally biased toward low complexity; it reads LSLPNSILRSRSLPSRPS. Basic and acidic residues predominate over residues 1678-1688; that stretch reads GDFFNSPKEEG. Serine 1683 carries the phosphoserine modification. The span at 1706–1720 shows a compositional bias: polar residues; that stretch reads STSMGQVAHPSSTGQ. Residues 1749–1759 show a composition bias toward low complexity; it reads TEATSSPTSSS. One can recognise a bMERB domain in the interval 1789–1939; the sequence is KQEELKRLHK…ERTQDQHFEN (151 aa).

This sequence belongs to the Mical family. As to quaternary structure, interacts with PLXNA4. Interacts with RAB1B. Interacts with MAPK1/ERK2. Interacts with RAB1B, RAB35, RAB8A, RAB10, RAB13 and RAB15 (in their GTP-bound forms); binding to RAB1B and RAB35 is of low affinity compared to other Rab proteins; binding to RAB1B and RAB35 is of low affinity compared to other Rab proteins; at least in case of RAB8A may bind 2 molecules of RAB8A simultaneously through a high and a low affinity binding site, respectively. The cofactor is FAD. In terms of tissue distribution, expressed only in testis (at protein level).

It is found in the cytoplasm. It localises to the nucleus. The enzyme catalyses L-methionyl-[F-actin] + NADPH + O2 + H(+) = L-methionyl-(R)-S-oxide-[F-actin] + NADP(+) + H2O. In terms of biological role, methionine monooxygenase that promotes depolymerization of F-actin by mediating oxidation of residues 'Met-44' and 'Met-47' on actin to form methionine-sulfoxide, resulting in actin filament disassembly and preventing repolymerization. Regulates the disassembly of branched actin networks also by oxidizing ARP3B-containing ARP2/3 complexes leading to ARP3B dissociation from the network. Acts as a key regulator of the SRF signaling pathway elicited by nerve growth factor and serum: mediates oxidation and subsequent depolymerization of nuclear actin, leading to increase MKL1/MRTF-A presence in the nucleus and promote SRF:MKL1/MRTF-A-dependent gene transcription. Does not activate SRF:MKL1/MRTF-A through RhoA. The chain is [F-actin]-monooxygenase MICAL2 from Mus musculus (Mouse).